The primary structure comprises 505 residues: uncharacterized protein (505 aa).

The signal sequence occupies residues 1-22; that stretch reads MAILKSALVGFICFLHFFIVNA. Residues Asn-25 and Asn-114 are each glycosylated (N-linked (GlcNAc...) asparagine). The next 5 helical transmembrane spans lie at 181–201, 216–236, 266–286, 291–311, and 318–338; these read LFLNPILLAINCLIGIWWSFI, ISGVVALSIVCTMVSTGYFYF, FLLLIVSLGYSIVVPSLGSLL, ILAGLQFVSSCFFLSSLFISP, and VILFAAPVFLITLFAMFLWIV. Residue Asn-342 is glycosylated (N-linked (GlcNAc...) asparagine). Transmembrane regions (helical) follow at residues 365–385 and 400–420; these read IVICFGIVAYASIVAANAILI and LLWFLNYGYTDILVLILMLTI. N-linked (GlcNAc...) asparagine glycosylation is present at Asn-454.

This sequence belongs to the LU7TM family.

The protein resides in the membrane. This is an uncharacterized protein from Schizosaccharomyces pombe (strain 972 / ATCC 24843) (Fission yeast).